The sequence spans 147 residues: Basic phospholipase A2 beta-bungarotoxin A2 chain (147 aa).

Residues 1 to 19 (MYPAHLLVLSAVCVSLLGA) form the signal peptide. Positions 20-27 (ANIPPYPL) are excised as a propeptide. Cystine bridges form between cysteine 54-cysteine 146, cysteine 56-cysteine 72, cysteine 71-cysteine 127, cysteine 78-cysteine 120, cysteine 88-cysteine 113, and cysteine 106-cysteine 118. Positions 55, 57, and 59 each coordinate Ca(2+). Residue histidine 75 is part of the active site. Residue aspartate 76 participates in Ca(2+) binding. Aspartate 121 is an active-site residue.

Belongs to the phospholipase A2 family. Group I subfamily. D49 sub-subfamily. As to quaternary structure, heterodimer; disulfide-linked. The A chains have phospholipase A2 activity and the B chains show homology with the basic protease inhibitors. Ca(2+) is required as a cofactor. In terms of tissue distribution, expressed by the venom gland.

The protein resides in the secreted. It catalyses the reaction a 1,2-diacyl-sn-glycero-3-phosphocholine + H2O = a 1-acyl-sn-glycero-3-phosphocholine + a fatty acid + H(+). In terms of biological role, snake venom phospholipase A2 (PLA2) that inhibits neuromuscular transmission by blocking acetylcholine release from the nerve termini. PLA2 catalyzes the calcium-dependent hydrolysis of the 2-acyl groups in 3-sn-phosphoglycerides. This Bungarus caeruleus (Indian krait) protein is Basic phospholipase A2 beta-bungarotoxin A2 chain.